A 143-amino-acid chain; its full sequence is Large-conductance mechanosensitive channel (143 aa).

The next 3 membrane-spanning stretches (helical) occupy residues 10 to 30 (FAIKGNMMDLAIGVIIGGAFG), 40 to 60 (IIMPLITVITGGGVDFSQKFI), and 86 to 106 (GNFLTILINFLILAWVVFLMV).

It belongs to the MscL family. As to quaternary structure, homopentamer.

The protein resides in the cell inner membrane. Channel that opens in response to stretch forces in the membrane lipid bilayer. May participate in the regulation of osmotic pressure changes within the cell. This chain is Large-conductance mechanosensitive channel, found in Acinetobacter baumannii (strain ATCC 17978 / DSM 105126 / CIP 53.77 / LMG 1025 / NCDC KC755 / 5377).